The chain runs to 1368 residues: Cingulin (1368 aa).

Residues 9–378 are interaction with TJP3/ZO3 and myosin; that stretch reads MADQHIPVGQ…KQQRTVQSEF (370 aa). The interval 9 to 435 is head; sequence MADQHIPVGQ…EKLPSLQVQP (427 aa). Positions 41-55 match the ZIM motif; sequence QDSYGVAVRVQGIDG. Disordered regions lie at residues 71–264, 278–312, 1053–1080, 1163–1183, and 1308–1368; these read FGVQ…TKPL, GQVR…DTAD, SRKE…NSSR, NRSR…RSRG, and QQEI…TSSC. A compositionally biased stretch (polar residues) spans 83-97; it reads NASNTSPPNYQNYSS. The segment at 101–294 is interaction with F-actin; that stretch reads GPSRSISSES…ARRSQALKDE (194 aa). Composition is skewed to low complexity over residues 116–132 and 200–211; these read PYGS…YSSA and SQSSRDSAWSRS. Residues 150–295 form an interaction with TJP2/ZO2 region; the sequence is SSLPRPLQAS…RRSQALKDER (146 aa). Positions 228–256 are enriched in polar residues; that stretch reads SATSQQSTSVSNKTKKNGLSTSSPSNQSN. Basic and acidic residues predominate over residues 290–312; it reads ALKDERKRSQSLDGRKNYHDTAD. The segment at 377–1368 is interaction with myosin; it reads EFQLKSTPDL…TESNLQTSSC (992 aa). Positions 436-1330 form a coiled coil; sequence GEDTISLGSQ…VMEKESKRKP (895 aa). Positions 1320–1338 are enriched in basic and acidic residues; the sequence is KVMEKESKRKPIRPAHDDD. Residues 1331–1368 form a tail region; sequence IRPAHDDDLSSDGEFGGPYDPSSITSLLTESNLQTSSC. A compositionally biased stretch (polar residues) spans 1352 to 1368; it reads SSITSLLTESNLQTSSC.

Belongs to the cingulin family. As to quaternary structure, parallel homodimer. Interacts with TJP1/ZO1 and TJP2/ZO2 in vivo, and TJP3/ZO3, myosin and OCLN in vitro, possibly directly. Acts as an F-actin bundling protein in vitro. Localized on the cytoplasmic face of tight junctions of polarized epithelia and some endothelia.

The protein resides in the cell junction. It localises to the tight junction. Its function is as follows. Probably plays a role in the formation and regulation of the tight junction (TJ) paracellular permeability barrier, possibly by linking ZO proteins to the actomyosin cytoskeleton. This is Cingulin from Xenopus laevis (African clawed frog).